We begin with the raw amino-acid sequence, 197 residues long: Probable nicotinate-nucleotide adenylyltransferase (197 aa).

It belongs to the NadD family.

It carries out the reaction nicotinate beta-D-ribonucleotide + ATP + H(+) = deamido-NAD(+) + diphosphate. Its pathway is cofactor biosynthesis; NAD(+) biosynthesis; deamido-NAD(+) from nicotinate D-ribonucleotide: step 1/1. Its function is as follows. Catalyzes the reversible adenylation of nicotinate mononucleotide (NaMN) to nicotinic acid adenine dinucleotide (NaAD). The protein is Probable nicotinate-nucleotide adenylyltransferase of Neisseria meningitidis serogroup C (strain 053442).